A 661-amino-acid chain; its full sequence is uncharacterized protein (661 aa).

16 helical membrane-spanning segments follow: residues 27–47 (LAIGLLGVCAVVAAFGLVSGA), 68–88 (VGFFAASLAGALCLGALIHVV), 116–136 (LWLGLAATMVVIQAAHDTGVG), 150–170 (VAASEMARGWIVAAICALVVA), 179–199 (WLGHVVLLVPTVLAVVATAVT), 214–234 (AAIVFAVAFATLTGLKIAAAL), 251–271 (GALALAYGAMLLYLFIPGWAV), 279–299 (GLLAGVILTSVWLFDCWRLLV), 313–333 (GAALAMMAAMASIAAMAVMTA), 369–389 (SLIGAAGVVLAIGYAAGFAAL), 396–416 (WPVGRLIAWLTGCAALVFTSG), 435–455 (MTLNMFIPVLLVLGGPVTLAL), 488–508 (PITAFVLFVASPYIVYFTPLF), 519–539 (EFMAIHFLVVGYLFYWAIIGI), 552–572 (IGLLFAVMPFHAFFGIALMTM), and 599–619 (GGGIAWSLTELPVIMVIVALV).

This sequence to M.leprae ML1998.

The protein localises to the cell membrane. This is an uncharacterized protein from Mycobacterium tuberculosis (strain CDC 1551 / Oshkosh).